Reading from the N-terminus, the 250-residue chain is Probable transcriptional regulatory protein ckrop_1032 (250 aa).

A disordered region spans residues 1 to 22; it reads MSGHSKWATTKHKKAANDAKRG.

This sequence belongs to the TACO1 family.

The protein resides in the cytoplasm. This Corynebacterium kroppenstedtii (strain DSM 44385 / JCM 11950 / CIP 105744 / CCUG 35717) protein is Probable transcriptional regulatory protein ckrop_1032.